The following is a 316-amino-acid chain: Delta(1)-pyrroline-2-carboxylate reductase (316 aa).

The protein belongs to the ornithine cyclodeaminase/mu-crystallin family. In terms of assembly, homodimer.

It catalyses the reaction L-proline + NAD(+) = 1-pyrroline-2-carboxylate + NADH + H(+). The enzyme catalyses L-proline + NADP(+) = 1-pyrroline-2-carboxylate + NADPH + H(+). In terms of biological role, catalyzes the reduction of Delta(1)-pyrroline-2-carboxylate (Pyr2C) to L-proline, using preferentially NADPH over NADH as the electron donor. Together with LhpH, is involved in a metabolic pathway that converts trans-3-hydroxy-L-proline (t3LHyp) to L-proline. To a much lesser extent, can also reduce Delta(1)-piperideine-2-carboxylate (Pip2C) to L-pipecolate in vitro; however, this activity has likely no physiological significance in vivo since C.psychrerythraea probably possesses no ability to metabolize D-lysine via the L-pipecolate pathway. Does not show ornithine cyclodeaminase (OCD) activity. The sequence is that of Delta(1)-pyrroline-2-carboxylate reductase from Colwellia psychrerythraea (strain 34H / ATCC BAA-681) (Vibrio psychroerythus).